Reading from the N-terminus, the 201-residue chain is Dephospho-CoA kinase (201 aa).

Residues 10 to 201 (LIGLTGGIAT…PQIIKAWHHR (192 aa)) enclose the DPCK domain. An ATP-binding site is contributed by 18 to 23 (ATGKST).

It belongs to the CoaE family.

It is found in the cytoplasm. The catalysed reaction is 3'-dephospho-CoA + ATP = ADP + CoA + H(+). The protein operates within cofactor biosynthesis; coenzyme A biosynthesis; CoA from (R)-pantothenate: step 5/5. Functionally, catalyzes the phosphorylation of the 3'-hydroxyl group of dephosphocoenzyme A to form coenzyme A. This is Dephospho-CoA kinase from Synechocystis sp. (strain ATCC 27184 / PCC 6803 / Kazusa).